Here is a 217-residue protein sequence, read N- to C-terminus: Large ribosomal subunit protein uL3 (217 aa).

The disordered stretch occupies residues 137–160 (VSASHGSHRNHRKPGSIGASSTPS).

Belongs to the universal ribosomal protein uL3 family. Part of the 50S ribosomal subunit. Forms a cluster with proteins L14 and L19.

One of the primary rRNA binding proteins, it binds directly near the 3'-end of the 23S rRNA, where it nucleates assembly of the 50S subunit. In Clavibacter michiganensis subsp. michiganensis (strain NCPPB 382), this protein is Large ribosomal subunit protein uL3.